Consider the following 297-residue polypeptide: Small ribosomal subunit protein uS9m (297 aa).

The interval 278–297 (VERKKPGKRKARKMPTWVKR) is disordered.

It belongs to the universal ribosomal protein uS9 family.

The protein resides in the mitochondrion. This is Small ribosomal subunit protein uS9m (MRPS9) from Kluyveromyces lactis (strain ATCC 8585 / CBS 2359 / DSM 70799 / NBRC 1267 / NRRL Y-1140 / WM37) (Yeast).